Reading from the N-terminus, the 650-residue chain is Fructose-1,6-bisphosphatase class 3 (650 aa).

It belongs to the FBPase class 3 family. Mn(2+) serves as cofactor.

The catalysed reaction is beta-D-fructose 1,6-bisphosphate + H2O = beta-D-fructose 6-phosphate + phosphate. It functions in the pathway carbohydrate biosynthesis; gluconeogenesis. The chain is Fructose-1,6-bisphosphatase class 3 from Staphylococcus saprophyticus subsp. saprophyticus (strain ATCC 15305 / DSM 20229 / NCIMB 8711 / NCTC 7292 / S-41).